The sequence spans 444 residues: 23S rRNA (uracil(1939)-C(5))-methyltransferase RlmD (444 aa).

The TRAM domain occupies 5–64 (KPKLNLTSQTARIVNLSHDGRGIARVNGKATFIQGALPGEVVEFQYTRIKKDFDEGKLLS). Cys-77, Cys-83, Cys-86, and Cys-166 together coordinate [4Fe-4S] cluster. 6 residues coordinate S-adenosyl-L-methionine: Gln-276, Phe-305, Asn-310, Glu-326, Asn-353, and Asp-374. The active-site Nucleophile is the Cys-400.

This sequence belongs to the class I-like SAM-binding methyltransferase superfamily. RNA M5U methyltransferase family. RlmD subfamily.

The catalysed reaction is uridine(1939) in 23S rRNA + S-adenosyl-L-methionine = 5-methyluridine(1939) in 23S rRNA + S-adenosyl-L-homocysteine + H(+). In terms of biological role, catalyzes the formation of 5-methyl-uridine at position 1939 (m5U1939) in 23S rRNA. In Legionella pneumophila (strain Corby), this protein is 23S rRNA (uracil(1939)-C(5))-methyltransferase RlmD.